We begin with the raw amino-acid sequence, 254 residues long: Imidazole glycerol phosphate synthase subunit HisF (254 aa).

Active-site residues include Asp-13 and Asp-132.

This sequence belongs to the HisA/HisF family. As to quaternary structure, heterodimer of HisH and HisF.

It localises to the cytoplasm. The catalysed reaction is 5-[(5-phospho-1-deoxy-D-ribulos-1-ylimino)methylamino]-1-(5-phospho-beta-D-ribosyl)imidazole-4-carboxamide + L-glutamine = D-erythro-1-(imidazol-4-yl)glycerol 3-phosphate + 5-amino-1-(5-phospho-beta-D-ribosyl)imidazole-4-carboxamide + L-glutamate + H(+). Its pathway is amino-acid biosynthesis; L-histidine biosynthesis; L-histidine from 5-phospho-alpha-D-ribose 1-diphosphate: step 5/9. Its function is as follows. IGPS catalyzes the conversion of PRFAR and glutamine to IGP, AICAR and glutamate. The HisF subunit catalyzes the cyclization activity that produces IGP and AICAR from PRFAR using the ammonia provided by the HisH subunit. The sequence is that of Imidazole glycerol phosphate synthase subunit HisF from Wolinella succinogenes (strain ATCC 29543 / DSM 1740 / CCUG 13145 / JCM 31913 / LMG 7466 / NCTC 11488 / FDC 602W) (Vibrio succinogenes).